Consider the following 476-residue polypeptide: Cysteine--tRNA ligase (476 aa).

Position 28 (cysteine 28) interacts with Zn(2+). The 'HIGH' region signature appears at 30-40 (PTVYDHTHLGH). Positions 208, 233, and 237 each coordinate Zn(2+). Residues 265–269 (KMSKS) carry the 'KMSKS' region motif. Position 268 (lysine 268) interacts with ATP.

This sequence belongs to the class-I aminoacyl-tRNA synthetase family. It depends on Zn(2+) as a cofactor.

Its subcellular location is the cytoplasm. It carries out the reaction tRNA(Cys) + L-cysteine + ATP = L-cysteinyl-tRNA(Cys) + AMP + diphosphate. The chain is Cysteine--tRNA ligase from Methanococcus maripaludis (strain C7 / ATCC BAA-1331).